The sequence spans 444 residues: Tol-Pal system protein TolB (444 aa).

The N-terminal stretch at 1-19 (MRNIIYFILSLLFSVTSYA) is a signal peptide.

Belongs to the TolB family. In terms of assembly, the Tol-Pal system is composed of five core proteins: the inner membrane proteins TolA, TolQ and TolR, the periplasmic protein TolB and the outer membrane protein Pal. They form a network linking the inner and outer membranes and the peptidoglycan layer.

Its subcellular location is the periplasm. Its function is as follows. Part of the Tol-Pal system, which plays a role in outer membrane invagination during cell division and is important for maintaining outer membrane integrity. The sequence is that of Tol-Pal system protein TolB from Rickettsia peacockii (strain Rustic).